A 370-amino-acid polypeptide reads, in one-letter code: MKVTILASAILALINGALALPANTPTLDVTLTQVDNTRIKATVKNTGNEKVTFVHLNFFQDAAPVKKVSLFRNATEVEFTGIKRRLLTEGLSDDALTTLAPGATFEDEFDVASTADLTEGGTVTIRTDGFVPITTDRKVSGYIPYQSNELEIEVDAAKAAAVPQAIKLLDRRTKVASCSGSRASALSTALRNAASLANAAASAASSGSSTRFQEYFKTTSSSTRNTVAARFRAVASEASSQSSGKTTYYCTDPYGYCDSNTLAYTLPSSNLIANCDIYYSYLPALTSSCHAQDQATTTLHEFTHAPAVYSPGTDDYAYGYRASTALSASQALLNADTYALFANGTPLLPLSTSTSKCSTLTMVIAVNLNC.

Residues 1-19 (MKVTILASAILALINGALA) form the signal peptide. Residues 20–172 (LPANTPTLDV…PQAIKLLDRR (153 aa)) constitute a propeptide that is removed on maturation. 2 cysteine pairs are disulfide-bonded: cysteine 178/cysteine 250 and cysteine 257/cysteine 275. Histidine 300 serves as a coordination point for Zn(2+). Glutamate 301 is an active-site residue. The Zn(2+) site is built by histidine 304 and aspartate 315.

The protein belongs to the peptidase M35 family. Zn(2+) serves as cofactor.

The protein localises to the secreted. It carries out the reaction Preferential cleavage of bonds with hydrophobic residues in P1'. Also 3-Asn-|-Gln-4 and 8-Gly-|-Ser-9 bonds in insulin B chain.. Secreted metalloproteinase that allows assimilation of proteinaceous substrates. Shows high activities on basic nuclear substrates such as histone and protamine. May be involved in virulence. This chain is Neutral protease 2 homolog AFUB_070680, found in Aspergillus fumigatus (strain CBS 144.89 / FGSC A1163 / CEA10) (Neosartorya fumigata).